A 422-amino-acid chain; its full sequence is uncharacterized protein (422 aa).

This sequence belongs to the N(4)/N(6)-methyltransferase family.

It carries out the reaction a 2'-deoxyadenosine in DNA + S-adenosyl-L-methionine = an N(6)-methyl-2'-deoxyadenosine in DNA + S-adenosyl-L-homocysteine + H(+). This is an uncharacterized protein from Mycoplasma pneumoniae (strain ATCC 29342 / M129 / Subtype 1) (Mycoplasmoides pneumoniae).